We begin with the raw amino-acid sequence, 91 residues long: Small ribosomal subunit protein uS19 (91 aa).

The protein belongs to the universal ribosomal protein uS19 family.

Its function is as follows. Protein S19 forms a complex with S13 that binds strongly to the 16S ribosomal RNA. The protein is Small ribosomal subunit protein uS19 of Pseudomonas syringae pv. tomato (strain ATCC BAA-871 / DC3000).